The sequence spans 439 residues: Xylose isomerase (439 aa).

Catalysis depends on residues H98 and D101. E229, E265, H268, D293, D304, D306, and D335 together coordinate Mg(2+).

The protein belongs to the xylose isomerase family. As to quaternary structure, homotetramer. Requires Mg(2+) as cofactor.

The protein resides in the cytoplasm. The catalysed reaction is alpha-D-xylose = alpha-D-xylulofuranose. Functionally, involved in D-xylose catabolism. This chain is Xylose isomerase (xylA), found in Staphylococcus xylosus.